The sequence spans 147 residues: MPVTVRVRRVGHRGPPLDLPRYESAGAAGLDLRADEPFTLAPGERRVVPTGLALELPPGHEGQVRPRSGLAARHGVGMVNAPGTIDADYRGEVGVILVNHGQAPVAFARGDRIAQLVIAPVVRAELELVDALTDSDRGAGGFGSTGQ.

Substrate-binding positions include 67-69 (RSG), N80, and 84-86 (TID).

Belongs to the dUTPase family. Requires Mg(2+) as cofactor.

It carries out the reaction dUTP + H2O = dUMP + diphosphate + H(+). Its pathway is pyrimidine metabolism; dUMP biosynthesis; dUMP from dCTP (dUTP route): step 2/2. Functionally, this enzyme is involved in nucleotide metabolism: it produces dUMP, the immediate precursor of thymidine nucleotides and it decreases the intracellular concentration of dUTP so that uracil cannot be incorporated into DNA. This chain is Deoxyuridine 5'-triphosphate nucleotidohydrolase, found in Anaeromyxobacter dehalogenans (strain 2CP-C).